The chain runs to 175 residues: Arginine repressor (175 aa).

Residues 1–23 (MSVSTPERGGAEQGKGPAIARTR) form a disordered region.

Belongs to the ArgR family.

It is found in the cytoplasm. The protein operates within amino-acid biosynthesis; L-arginine biosynthesis [regulation]. Functionally, regulates arginine biosynthesis genes. In Nocardia farcinica (strain IFM 10152), this protein is Arginine repressor.